A 283-amino-acid chain; its full sequence is DegV domain-containing protein BH3627 (283 aa).

The region spanning 4 to 281 (IAIVTDSTAY…EGSIGLSWYI (278 aa)) is the DegV domain. The hexadecanoate site is built by T62 and S95.

Functionally, may bind long-chain fatty acids, such as palmitate, and may play a role in lipid transport or fatty acid metabolism. This is DegV domain-containing protein BH3627 from Halalkalibacterium halodurans (strain ATCC BAA-125 / DSM 18197 / FERM 7344 / JCM 9153 / C-125) (Bacillus halodurans).